Here is a 525-residue protein sequence, read N- to C-terminus: Cytochrome P450 4V2 (525 aa).

A helical membrane pass occupies residues 13-33 (LLLWGAASAVSVAGATVLLNI). Heme-binding residues include Glu-329 and Cys-467.

It belongs to the cytochrome P450 family. It depends on heme as a cofactor.

Its subcellular location is the endoplasmic reticulum membrane. It catalyses the reaction dodecanoate + reduced [NADPH--hemoprotein reductase] + O2 = 12-hydroxydodecanoate + oxidized [NADPH--hemoprotein reductase] + H2O + H(+). The catalysed reaction is tetradecanoate + reduced [NADPH--hemoprotein reductase] + O2 = 14-hydroxytetradecanoate + oxidized [NADPH--hemoprotein reductase] + H2O + H(+). The enzyme catalyses hexadecanoate + reduced [NADPH--hemoprotein reductase] + O2 = 16-hydroxyhexadecanoate + oxidized [NADPH--hemoprotein reductase] + H2O + H(+). It carries out the reaction (5Z,8Z,11Z,14Z,17Z)-eicosapentaenoate + reduced [NADPH--hemoprotein reductase] + O2 = 20-hydroxy-(5Z,8Z,11Z,14Z,17Z)-eicosapentaenoate + oxidized [NADPH--hemoprotein reductase] + H2O + H(+). It catalyses the reaction (4Z,7Z,10Z,13Z,16Z,19Z)-docosahexaenoate + reduced [NADPH--hemoprotein reductase] + O2 = 22-hydroxy-(4Z,7Z,10Z,13Z,16Z,19Z)-docosahexaenoate + oxidized [NADPH--hemoprotein reductase] + H2O + H(+). Its pathway is lipid metabolism; fatty acid metabolism. Its activity is regulated as follows. Inhibited by N-hydroxy-N'-(4-n-butyl-2-methylphenyl formamidine)(HET0016) with an IC(50) of 38 nM. Its function is as follows. A cytochrome P450 monooxygenase involved in fatty acid metabolism in the eye. Catalyzes the omega-hydroxylation of polyunsaturated fatty acids (PUFAs) docosahexaenoate (DHA) and its precursor eicosapentaenoate (EPA), and may contribute to the homeostasis of these retinal PUFAs. Omega hydroxylates saturated fatty acids such as laurate, myristate and palmitate, the catalytic efficiency decreasing in the following order: myristate &gt; laurate &gt; palmitate (C14&gt;C12&gt;C16). Mechanistically, uses molecular oxygen inserting one oxygen atom into a substrate, and reducing the second into a water molecule, with two electrons provided by NADPH via cytochrome P450 reductase (CPR; NADPH-ferrihemoprotein reductase). This is Cytochrome P450 4V2 (Cyp4v2) from Rattus norvegicus (Rat).